The following is a 696-amino-acid chain: UvrABC system protein B (696 aa).

Positions E46 to R433 constitute a Helicase ATP-binding domain. G59 to T66 is a binding site for ATP. The short motif at Y112–I135 is the Beta-hairpin element. The Helicase C-terminal domain occupies Q450–I616. The region spanning A647–R682 is the UVR domain.

It belongs to the UvrB family. As to quaternary structure, forms a heterotetramer with UvrA during the search for lesions. Interacts with UvrC in an incision complex.

The protein resides in the cytoplasm. Its function is as follows. The UvrABC repair system catalyzes the recognition and processing of DNA lesions. A damage recognition complex composed of 2 UvrA and 2 UvrB subunits scans DNA for abnormalities. Upon binding of the UvrA(2)B(2) complex to a putative damaged site, the DNA wraps around one UvrB monomer. DNA wrap is dependent on ATP binding by UvrB and probably causes local melting of the DNA helix, facilitating insertion of UvrB beta-hairpin between the DNA strands. Then UvrB probes one DNA strand for the presence of a lesion. If a lesion is found the UvrA subunits dissociate and the UvrB-DNA preincision complex is formed. This complex is subsequently bound by UvrC and the second UvrB is released. If no lesion is found, the DNA wraps around the other UvrB subunit that will check the other stand for damage. The polypeptide is UvrABC system protein B (Burkholderia mallei (strain ATCC 23344)).